Here is a 475-residue protein sequence, read N- to C-terminus: Ribulose bisphosphate carboxylase large chain (475 aa).

The propeptide occupies methionine 1–alanine 2. N-acetylproline is present on proline 3. Lysine 14 carries the N6,N6,N6-trimethyllysine modification. 2 residues coordinate substrate: asparagine 123 and threonine 173. The active-site Proton acceptor is lysine 175. Lysine 177 serves as a coordination point for substrate. Positions 201, 203, and 204 each coordinate Mg(2+). Residue lysine 201 is modified to N6-carboxylysine. Catalysis depends on histidine 294, which acts as the Proton acceptor. Substrate-binding residues include arginine 295, histidine 327, and serine 379.

Belongs to the RuBisCO large chain family. Type I subfamily. In terms of assembly, heterohexadecamer of 8 large chains and 8 small chains; disulfide-linked. The disulfide link is formed within the large subunit homodimers. Mg(2+) serves as cofactor. Post-translationally, the disulfide bond which can form in the large chain dimeric partners within the hexadecamer appears to be associated with oxidative stress and protein turnover.

It is found in the plastid. The protein resides in the chloroplast. The catalysed reaction is 2 (2R)-3-phosphoglycerate + 2 H(+) = D-ribulose 1,5-bisphosphate + CO2 + H2O. The enzyme catalyses D-ribulose 1,5-bisphosphate + O2 = 2-phosphoglycolate + (2R)-3-phosphoglycerate + 2 H(+). Its function is as follows. RuBisCO catalyzes two reactions: the carboxylation of D-ribulose 1,5-bisphosphate, the primary event in carbon dioxide fixation, as well as the oxidative fragmentation of the pentose substrate in the photorespiration process. Both reactions occur simultaneously and in competition at the same active site. This Bryopsis maxima (Green alga) protein is Ribulose bisphosphate carboxylase large chain.